The following is a 251-amino-acid chain: DNA repair protein RecO (251 aa).

It belongs to the RecO family.

Its function is as follows. Involved in DNA repair and RecF pathway recombination. In Lactococcus lactis subsp. cremoris (strain SK11), this protein is DNA repair protein RecO.